The following is a 363-amino-acid chain: S-adenosylmethionine:tRNA ribosyltransferase-isomerase (363 aa).

The protein belongs to the QueA family. As to quaternary structure, monomer.

It localises to the cytoplasm. The enzyme catalyses 7-aminomethyl-7-carbaguanosine(34) in tRNA + S-adenosyl-L-methionine = epoxyqueuosine(34) in tRNA + adenine + L-methionine + 2 H(+). It functions in the pathway tRNA modification; tRNA-queuosine biosynthesis. In terms of biological role, transfers and isomerizes the ribose moiety from AdoMet to the 7-aminomethyl group of 7-deazaguanine (preQ1-tRNA) to give epoxyqueuosine (oQ-tRNA). This is S-adenosylmethionine:tRNA ribosyltransferase-isomerase from Mannheimia succiniciproducens (strain KCTC 0769BP / MBEL55E).